The following is a 96-amino-acid chain: Prokineticin Bv8 (96 aa).

The signal sequence occupies residues 1–19 (MKCFAQIVVLLLVIAFSHG). The segment at 20 to 24 (AVITG) is may be important for binding to prokineticin receptor 2. 5 disulfides stabilise this stretch: Cys26-Cys38, Cys32-Cys50, Cys37-Cys78, Cys60-Cys86, and Cys80-Cys95.

Expressed by the skin glands.

The protein localises to the secreted. Its function is as follows. Potent agonist for both PKR1/PROKR1 and PKR2/PROKR2, and inducer of a potent and long-lasting hyperalgesia. Shows an EC(50) of 0.264 nM, when tested on neuroblastoma cells (SH-SY5Y) which endogenously express mainly PKR2/PROKR2. Also potentiates capsaicin-induced TRPV1 current, when tested on DRG neurons. Induces a biphasic hyperalgesia to tactile and thermal stimuli after systemic injection of this protein into rat. The initial phase of hyperalgesia is caused by a local action on nociceptors, because intraplantar injection of this protein causes a strong and localized hyperalgesia with a similar time course to that of the initial phase of hyperalgesia seen with systemic injection. The secondary phase of hyperalgesia is not seen with local intraplantar injection and is therefore probably attributable to a central action of this protein. At subnanomolar concentrations, this protein both induces potent chemotaxis of macrophages and stimulates LPS-induced production of the pro-inflammatory cytokines IL-1 and IL-12. In vivo, this protein potently stimulates the contraction of the guinea-pig gastrointestinal (GI) smooth muscle (at nanomolar concentration). The polypeptide is Prokineticin Bv8 (Bombina variegata (Yellow-bellied toad)).